Here is a 246-residue protein sequence, read N- to C-terminus: Phycocyanobilin:ferredoxin oxidoreductase (246 aa).

Belongs to the HY2 family.

The enzyme catalyses (2R,3Z)-phycocyanobilin + 4 oxidized [2Fe-2S]-[ferredoxin] = biliverdin IXalpha + 4 reduced [2Fe-2S]-[ferredoxin] + 4 H(+). Its function is as follows. Catalyzes the four-electron reduction of biliverdin IX-alpha (2-electron reduction at both the A and D rings); the reaction proceeds via an isolatable 2-electron intermediate, 181,182-dihydrobiliverdin. The protein is Phycocyanobilin:ferredoxin oxidoreductase of Synechococcus sp. (strain CC9902).